Consider the following 347-residue polypeptide: Heme A synthase (347 aa).

8 helical membrane passes run 14 to 34 (VKIW…IGGI), 96 to 116 (FHRL…LYFM), 129 to 149 (FILI…MVKS), 162 to 182 (LAMH…HFLL), 199 to 219 (VFYI…LVAG), 260 to 280 (FIHE…LLVL), 287 to 307 (MYLL…TFIY), and 311 to 331 (IILA…SIYL). His262 lines the heme pocket. Residue His317 coordinates heme.

Belongs to the COX15/CtaA family. Type 2 subfamily. As to quaternary structure, interacts with CtaB. Heme b serves as cofactor.

Its subcellular location is the cell membrane. It catalyses the reaction Fe(II)-heme o + 2 A + H2O = Fe(II)-heme a + 2 AH2. It functions in the pathway porphyrin-containing compound metabolism; heme A biosynthesis; heme A from heme O: step 1/1. Functionally, catalyzes the conversion of heme O to heme A by two successive hydroxylations of the methyl group at C8. The first hydroxylation forms heme I, the second hydroxylation results in an unstable dihydroxymethyl group, which spontaneously dehydrates, resulting in the formyl group of heme A. This chain is Heme A synthase, found in Ehrlichia ruminantium (strain Gardel).